Consider the following 529-residue polypeptide: Low affinity inorganic phosphate transporter 5 (529 aa).

At 1–21 (MASNNLNVLNALDTAHTQWYH) the chain is on the cytoplasmic side. A helical membrane pass occupies residues 22–42 (VTAVVIAGMGFFTDAYDLFCI). The Extracellular portion of the chain corresponds to 43–71 (STISKLLGRLYYYDPHTHAPGKLPHTVNN). Residues 72–92 (WVTGVALVGTLTGQLVFGWLG) form a helical membrane-spanning segment. Residues 93–99 (DKLGRKK) lie on the Cytoplasmic side of the membrane. A helical transmembrane segment spans residues 100–120 (VYGLTLILMVICALSSGLSFG). The Extracellular segment spans residues 121 to 124 (YSRK). The chain crosses the membrane as a helical span at residues 125-145 (VVIGTLCFFRFWLGFGIGGDY). At 146-163 (PLSATIMSEYANKRTRGA) the chain is on the cytoplasmic side. Residues 164–184 (FIAAVFAMQGVGIIFAGLVLM) form a helical membrane-spanning segment. Residues 185 to 211 (TVSKVFLMRYAGKAFSTDEVFSTEPEA) are Extracellular-facing. A helical membrane pass occupies residues 212 to 232 (DYVWRIVLMLGALPALLTYYW). Residues 233-291 (RMKMPETGRYTAIIEGNAKQAAIDMGKVLEIEIQAEGEKLAKFKSANDYSLLSNEFFQR) are Cytoplasmic-facing. Residues 292–312 (HGLHLIGTMSTWFLLDIAFYS) traverse the membrane as a helical segment. Over 313–344 (QNLTQKDIFPTMGLVSDAKSISALREMFETSR) the chain is Extracellular. Asn-314 carries an N-linked (GlcNAc...) asparagine glycan. The chain crosses the membrane as a helical span at residues 345-365 (AMFVIALLGTFPGYWFTVFFI). Topologically, residues 366–374 (EKIGRFKIQ) are cytoplasmic. Residues 375–395 (LMGFFMMSIFMAIIGVRYDYL) form a helical membrane-spanning segment. Over 396-405 (KTKDHKWTFA) the chain is Extracellular. A helical membrane pass occupies residues 406 to 426 (ALYGLTFFFANSGPNSTTFVL). Residues 427 to 472 (PAELFPTRVRSTCHALSAASGKAGAMVSAFGVQQYTQDGEVHKIKK) lie on the Cytoplasmic side of the membrane. The chain crosses the membrane as a helical span at residues 473–493 (AMLFLAFTNMVGFCCTFLVTE). Residues 494-529 (TKGRSLEEISGEDENQNETKMKGRPVSGGHQDDGWD) lie on the Extracellular side of the membrane. A disordered region spans residues 500-529 (EEISGEDENQNETKMKGRPVSGGHQDDGWD). Asn-510 carries N-linked (GlcNAc...) asparagine glycosylation.

This sequence belongs to the major facilitator superfamily. Phosphate:H(+) symporter (TC 2.A.1.9) family. In terms of tissue distribution, expressed at low levels in non-mycorrhized roots.

The protein resides in the cell membrane. The enzyme catalyses phosphate(in) + H(+)(in) = phosphate(out) + H(+)(out). In terms of biological role, low-affinity transporter for external inorganic phosphate (Pi) probably involved in the acquisition of phosphate released by arbuscular mycorrhizal (AM) fungi during AM symbiosis. This is Low affinity inorganic phosphate transporter 5 from Petunia hybrida (Petunia).